The sequence spans 431 residues: Adenylosuccinate synthetase (431 aa).

GTP-binding positions include 13–19 (GDEGKGK) and 41–43 (GHT). The active-site Proton acceptor is Asp14. 2 residues coordinate Mg(2+): Asp14 and Gly41. IMP is bound by residues 14–17 (DEGK), 39–42 (NAGH), Thr130, Arg144, Gln225, Thr240, and Arg304. His42 serves as the catalytic Proton donor. 300–306 (ATTGRKR) contacts substrate. GTP is bound by residues Arg306, 332–334 (KLD), and 415–417 (STG).

It belongs to the adenylosuccinate synthetase family. In terms of assembly, homodimer. The cofactor is Mg(2+).

It localises to the cytoplasm. The catalysed reaction is IMP + L-aspartate + GTP = N(6)-(1,2-dicarboxyethyl)-AMP + GDP + phosphate + 2 H(+). The protein operates within purine metabolism; AMP biosynthesis via de novo pathway; AMP from IMP: step 1/2. Plays an important role in the de novo pathway of purine nucleotide biosynthesis. Catalyzes the first committed step in the biosynthesis of AMP from IMP. This Shewanella halifaxensis (strain HAW-EB4) protein is Adenylosuccinate synthetase.